A 155-amino-acid chain; its full sequence is Ribosome maturation factor RimP (155 aa).

Belongs to the RimP family.

The protein resides in the cytoplasm. Functionally, required for maturation of 30S ribosomal subunits. The sequence is that of Ribosome maturation factor RimP from Agathobacter rectalis (strain ATCC 33656 / DSM 3377 / JCM 17463 / KCTC 5835 / VPI 0990) (Eubacterium rectale).